The primary structure comprises 1065 residues: Probable importin-7 homolog (1065 aa).

An Importin N-terminal domain is found at 25–98; sequence AEAQLQQIKV…KENLIDLLVH (74 aa). Residues 958–996 form a disordered region; that stretch reads ENGGDLGEDEGDNFDDQNDDDDQDSEEDLFEDEDTPDFE. A compositionally biased stretch (acidic residues) spans 963–996; the sequence is LGEDEGDNFDDQNDDDDQDSEEDLFEDEDTPDFE.

Belongs to the importin beta family.

The protein resides in the cytoplasm. The protein localises to the nucleus. In terms of biological role, may function in nuclear protein import. The chain is Probable importin-7 homolog from Dictyostelium discoideum (Social amoeba).